We begin with the raw amino-acid sequence, 407 residues long: Multifunctional CCA protein (407 aa).

2 residues coordinate ATP: Gly-8 and Arg-11. CTP-binding residues include Gly-8 and Arg-11. Asp-21 and Asp-23 together coordinate Mg(2+). Positions 91, 137, and 140 each coordinate ATP. CTP-binding residues include Arg-91, Arg-137, and Arg-140. One can recognise an HD domain in the interval 228-329; that stretch reads TGIHTLLVAE…VKIFNKLDVW (102 aa).

It belongs to the tRNA nucleotidyltransferase/poly(A) polymerase family. Bacterial CCA-adding enzyme type 1 subfamily. Monomer. Can also form homodimers and oligomers. Mg(2+) serves as cofactor. It depends on Ni(2+) as a cofactor.

The enzyme catalyses a tRNA precursor + 2 CTP + ATP = a tRNA with a 3' CCA end + 3 diphosphate. It carries out the reaction a tRNA with a 3' CCA end + 2 CTP + ATP = a tRNA with a 3' CCACCA end + 3 diphosphate. Functionally, catalyzes the addition and repair of the essential 3'-terminal CCA sequence in tRNAs without using a nucleic acid template. Adds these three nucleotides in the order of C, C, and A to the tRNA nucleotide-73, using CTP and ATP as substrates and producing inorganic pyrophosphate. tRNA 3'-terminal CCA addition is required both for tRNA processing and repair. Also involved in tRNA surveillance by mediating tandem CCA addition to generate a CCACCA at the 3' terminus of unstable tRNAs. While stable tRNAs receive only 3'-terminal CCA, unstable tRNAs are marked with CCACCA and rapidly degraded. This chain is Multifunctional CCA protein, found in Vibrio vulnificus (strain CMCP6).